Reading from the N-terminus, the 257-residue chain is Imidazole glycerol phosphate synthase subunit HisF (257 aa).

Catalysis depends on residues Asp12 and Asp131.

This sequence belongs to the HisA/HisF family. As to quaternary structure, heterodimer of HisH and HisF.

It localises to the cytoplasm. It carries out the reaction 5-[(5-phospho-1-deoxy-D-ribulos-1-ylimino)methylamino]-1-(5-phospho-beta-D-ribosyl)imidazole-4-carboxamide + L-glutamine = D-erythro-1-(imidazol-4-yl)glycerol 3-phosphate + 5-amino-1-(5-phospho-beta-D-ribosyl)imidazole-4-carboxamide + L-glutamate + H(+). It functions in the pathway amino-acid biosynthesis; L-histidine biosynthesis; L-histidine from 5-phospho-alpha-D-ribose 1-diphosphate: step 5/9. In terms of biological role, IGPS catalyzes the conversion of PRFAR and glutamine to IGP, AICAR and glutamate. The HisF subunit catalyzes the cyclization activity that produces IGP and AICAR from PRFAR using the ammonia provided by the HisH subunit. The polypeptide is Imidazole glycerol phosphate synthase subunit HisF (Kineococcus radiotolerans (strain ATCC BAA-149 / DSM 14245 / SRS30216)).